The following is a 310-amino-acid chain: Olfactory receptor 8G3 (310 aa).

The Extracellular portion of the chain corresponds to M1–L25. Residue N5 is glycosylated (N-linked (GlcNAc...) asparagine). A helical transmembrane segment spans residues R26–I46. Residues T47 to H54 lie on the Cytoplasmic side of the membrane. The helical transmembrane segment at L55 to T75 threads the bilayer. Over V76–A99 the chain is Extracellular. A disulfide bridge links C97 with C189. The chain crosses the membrane as a helical span at residues Q100–Y120. Residues D121 to H139 lie on the Cytoplasmic side of the membrane. The chain crosses the membrane as a helical span at residues H140–T160. At S161–L197 the chain is on the extracellular side. A helical transmembrane segment spans residues L198–S217. Residues Y218–A237 lie on the Cytoplasmic side of the membrane. The helical transmembrane segment at F238–M258 threads the bilayer. The Extracellular segment spans residues Y259–R271. Residues K272–L292 form a helical membrane-spanning segment. The Cytoplasmic portion of the chain corresponds to R293–C310.

It belongs to the G-protein coupled receptor 1 family.

The protein resides in the cell membrane. Odorant receptor. This Homo sapiens (Human) protein is Olfactory receptor 8G3.